The following is a 909-amino-acid chain: Yellow mounds protein A (909 aa).

Positions 7 to 283 constitute an MIF4G domain; the sequence is LNVVSRILNK…KNLFELKNNK (277 aa). Disordered regions lie at residues 178-232, 415-439, 460-537, 627-689, and 704-774; these read SMGG…NNNI, MESS…SGIK, INLP…SSAP, VPPV…SEAR, and SLSG…AKKH. The segment covering 204 to 215 has biased composition (acidic residues); that stretch reads DDDDHDEEDNEN. 2 stretches are compositionally biased toward low complexity: residues 216–231 and 417–436; these read NYEN…NNNN and SSSN…SSSS. Positions 473 to 490 are enriched in polar residues; that stretch reads RSNSPSLSSVVKQPQSQQ. Over residues 491–525 the composition is skewed to low complexity; the sequence is NNNNNNNNNNNNTTITTTTSSNNNINNNNNNNNNN. The span at 721–738 shows a compositional bias: polar residues; that stretch reads STPTLKSTPAIVQNGGSI. A compositionally biased stretch (low complexity) spans 739 to 756; sequence TSTSSSSSSSSSSSSSTT. A coiled-coil region spans residues 845–877; it reads TMLFDLEEMAQEQQNLEKQNDQQQNLLTQNNQI.

In terms of biological role, plays as essential role in regulating terminal differentiation. The chain is Yellow mounds protein A (yelA) from Dictyostelium discoideum (Social amoeba).